The primary structure comprises 195 residues: MSAPQVGVLALQGDTREHLAALREAGAEARTVRRLDELNSVDALVIPGGESTAMSHLLREFGLLEPLRARLAEGMPAYGSCAGMILLATEIADAGVAGREALPLGGIDMTVRRNAFGRQVDSFEEDVEFEGLDGPVHAVFIRAPWVERVGPDVEVLARAGGHPVAVRQGKMLATAFHPEVTGDRRVHRLFVASLS.

49–51 (GES) is an L-glutamine binding site. The active-site Nucleophile is C81. Residues R113 and 141–142 (IR) each bind L-glutamine. Active-site charge relay system residues include H177 and E179.

It belongs to the glutaminase PdxT/SNO family. In the presence of PdxS, forms a dodecamer of heterodimers. Only shows activity in the heterodimer.

The catalysed reaction is aldehydo-D-ribose 5-phosphate + D-glyceraldehyde 3-phosphate + L-glutamine = pyridoxal 5'-phosphate + L-glutamate + phosphate + 3 H2O + H(+). It catalyses the reaction L-glutamine + H2O = L-glutamate + NH4(+). The protein operates within cofactor biosynthesis; pyridoxal 5'-phosphate biosynthesis. In terms of biological role, catalyzes the hydrolysis of glutamine to glutamate and ammonia as part of the biosynthesis of pyridoxal 5'-phosphate. The resulting ammonia molecule is channeled to the active site of PdxS. The sequence is that of Pyridoxal 5'-phosphate synthase subunit PdxT from Mycolicibacterium vanbaalenii (strain DSM 7251 / JCM 13017 / BCRC 16820 / KCTC 9966 / NRRL B-24157 / PYR-1) (Mycobacterium vanbaalenii).